A 209-amino-acid chain; its full sequence is Bilin biosynthesis protein RpcF (209 aa).

This sequence belongs to the CpcE/RpcE/PecE family.

In terms of biological role, an enzyme involved in the biosynthesis of bilin. Might be involved in the specific attachment of phycoerythrobilin (PEB) to the R-phycocyanin II alpha chain. The sequence is that of Bilin biosynthesis protein RpcF (rpcF) from Synechococcus sp. (strain WH8020).